Reading from the N-terminus, the 477-residue chain is (R)-2-hydroxyglutaryl-CoA dehydratase, subunit alpha (477 aa).

This sequence belongs to the FldB/FldC dehydratase alpha/beta subunit family. As to quaternary structure, the (R)-2-hydroxyglutaryl-CoA dehydratase enzyme system is a heterodimer composed of an alpha subunit (HgdA) and a beta subunit (HgdB). [4Fe-4S] cluster is required as a cofactor. FMN serves as cofactor. Requires Mg(2+) as cofactor.

The protein localises to the cytoplasm. The catalysed reaction is (R)-2-hydroxyglutaryl-CoA = (2E)-glutaconyl-CoA + H2O. It participates in amino-acid degradation; L-glutamate degradation via hydroxyglutarate pathway; crotonoyl-CoA from L-glutamate: step 4/5. With respect to regulation, activated by the HgdC. Reversibly inactivated by oxidants such as 2-nitrophenol, 3-nitrophenol, 4-nitrophenol, 4-nitrobenzoate, carbonyl cyanide 4-(trifluoromethoxy)phenylhydrazone (FCCP) and chloramphenicol. Irreversibly inactivated by oxidants such as hydroxylamine and nitrite. Involved in the fermentation of L-glutamate via the hydroxyglutarate pathway. Catalyzes the reversible syn-elimination of water from (R)-2-hydroxyglutaryl-CoA to yield (E)-glutaconyl-CoA. The dehydration mechanism involves a transient one electron reduction of the thioester from (R)-2-hydroxyglutaryl-CoA, generating a ketyl radical. Prior to (E)-glutaconyl-CoA formation, the ketyl radical is subsequently reoxidized by electron transfer back to the HgdA-HgdB complex (CompD) to avoid change in oxidation state of the substrate. The appropriate redox state of dehydratase HgdA-HgdB complex (CompD) is maintained by HgdC (CompA) via hydrolysis of ATP and ATP-dependent electron transfer. Since the electron is recycled, the dehydratase is able to perform several turnovers with only catalytic amounts of ATP and substoichiometric amounts of HgdC (CompA). In Acidaminococcus fermentans (strain ATCC 25085 / DSM 20731 / CCUG 9996 / CIP 106432 / VR4), this protein is (R)-2-hydroxyglutaryl-CoA dehydratase, subunit alpha.